A 298-amino-acid polypeptide reads, in one-letter code: Beta-1,3-galactosyltransferase 5 (298 aa).

The Cytoplasmic segment spans residues methionine 1 to arginine 7. Residues leucine 8–leucine 28 form a helical; Signal-anchor for type II membrane protein membrane-spanning segment. Residues asparagine 29–alanine 298 are Lumenal-facing. Residues asparagine 130, asparagine 174, and asparagine 231 are each glycosylated (N-linked (GlcNAc...) asparagine).

The protein belongs to the glycosyltransferase 31 family.

The protein localises to the golgi apparatus membrane. The catalysed reaction is a globoside Gb4Cer (d18:1(4E)) + UDP-alpha-D-galactose = a globoside GalGb4Cer (d18:1(4E)) + UDP + H(+). The protein operates within protein modification; protein glycosylation. In terms of biological role, catalyzes the transfer of Gal to GlcNAc-based acceptors with a preference for the core3 O-linked glycan GlcNAc(beta1,3)GalNAc structure. Can use glycolipid LC3Cer as an efficient acceptor. In Gorilla gorilla gorilla (Western lowland gorilla), this protein is Beta-1,3-galactosyltransferase 5 (B3GALT5).